The primary structure comprises 516 residues: Maturase K (516 aa).

This sequence belongs to the intron maturase 2 family. MatK subfamily.

The protein localises to the plastid. The protein resides in the chloroplast. Functionally, usually encoded in the trnK tRNA gene intron. Probably assists in splicing its own and other chloroplast group II introns. This Colchicum speciosum (Giant meadow saffron) protein is Maturase K.